We begin with the raw amino-acid sequence, 458 residues long: UDP-N-acetylmuramoylalanine--D-glutamate ligase (458 aa).

124 to 130 is an ATP binding site; the sequence is GSDGKTT.

This sequence belongs to the MurCDEF family.

The protein localises to the cytoplasm. It catalyses the reaction UDP-N-acetyl-alpha-D-muramoyl-L-alanine + D-glutamate + ATP = UDP-N-acetyl-alpha-D-muramoyl-L-alanyl-D-glutamate + ADP + phosphate + H(+). Its pathway is cell wall biogenesis; peptidoglycan biosynthesis. Its function is as follows. Cell wall formation. Catalyzes the addition of glutamate to the nucleotide precursor UDP-N-acetylmuramoyl-L-alanine (UMA). In Clostridium perfringens (strain 13 / Type A), this protein is UDP-N-acetylmuramoylalanine--D-glutamate ligase.